We begin with the raw amino-acid sequence, 227 residues long: Ribose-5-phosphate isomerase A (227 aa).

Substrate contacts are provided by residues 26-29 (TGST), 82-85 (DGAD), and 95-98 (KGGG). E104 acts as the Proton acceptor in catalysis. K122 lines the substrate pocket.

It belongs to the ribose 5-phosphate isomerase family. As to quaternary structure, homodimer.

It catalyses the reaction aldehydo-D-ribose 5-phosphate = D-ribulose 5-phosphate. Its pathway is carbohydrate degradation; pentose phosphate pathway; D-ribose 5-phosphate from D-ribulose 5-phosphate (non-oxidative stage): step 1/1. In terms of biological role, catalyzes the reversible conversion of ribose-5-phosphate to ribulose 5-phosphate. This is Ribose-5-phosphate isomerase A from Streptococcus pyogenes serotype M1.